The chain runs to 664 residues: Protein cueball (664 aa).

The signal sequence occupies residues 1–21 (MRNLGIAVTFAVLLVIGYVTA). Residues 22-552 (LEWDAVVTTD…VTYCKNSFNR (531 aa)) are Extracellular-facing. N-linked (GlcNAc...) asparagine glycans are attached at residues Asn-40, Asn-140, and Asn-188. 3 LDL-receptor class B repeats span residues 115-157 (RKLY…ENHD), 168-211 (RHLY…DHYN), and 212-257 (NRIY…NSQY). EGF-like domains follow at residues 367-399 (EIPICNNFCVHGECVVGADSRPMCKCHAEFEGE), 402-438 (DRNICDGYCLNNGRCALSATGQRSCTCSKNFSGARCE), and 473-510 (EEYTCNNYCLHDGTCILNNDTMLVECRCGSEYTGKRCE). 8 disulfide bridges follow: Cys-371-Cys-380, Cys-375-Cys-390, Cys-406-Cys-416, Cys-410-Cys-426, Cys-428-Cys-437, Cys-477-Cys-487, Cys-481-Cys-498, and Cys-500-Cys-509. N-linked (GlcNAc...) asparagine glycosylation occurs at Asn-431. Asn-491 carries an N-linked (GlcNAc...) asparagine glycan. N-linked (GlcNAc...) asparagine glycosylation occurs at Asn-551. Residues 553–573 (TVVYVSLAFTASLVTLVTILC) form a helical membrane-spanning segment. The Cytoplasmic segment spans residues 574–664 (TVRRMYERNR…KLPSCVAEKN (91 aa)).

The protein belongs to the cueball family.

It localises to the cell membrane. Its function is as follows. Has a role in spermatogenesis and oogenesis. In Aedes aegypti (Yellowfever mosquito), this protein is Protein cueball.